The following is a 68-amino-acid chain: Copper transport protein ATOX1 (68 aa).

The region spanning 1–63 (MPKHEFSVDM…TLNKTGKAVS (63 aa)) is the HMA domain. 2 residues coordinate Cu cation: C12 and C15. Residue S47 is modified to Phosphoserine. N6-acetyllysine is present on K60.

This sequence belongs to the ATX1 family. As to quaternary structure, homodimer. Interacts with ATP7B. Interacts with ATP7A. Interacts (via dimer form) with SLC31A1 (via C-terminal domain); this interaction improves ATOX1 stability and controls intracellular Cu(I) levels.

Functionally, binds and deliver cytosolic copper to the copper ATPase proteins. May be important in cellular antioxidant defense. This Rattus norvegicus (Rat) protein is Copper transport protein ATOX1.